The primary structure comprises 167 residues: Mitochondrial inner membrane protease subunit 1 (167 aa).

Catalysis depends on residues S40 and K83.

It belongs to the peptidase S26 family. IMP1 subfamily. As to quaternary structure, heterodimer of 2 subunits, IMMPL1 and IMMPL2.

The protein resides in the mitochondrion inner membrane. Functionally, catalyzes the removal of transit peptides required for the targeting of proteins from the mitochondrial matrix, across the inner membrane, into the inter-membrane space. This chain is Mitochondrial inner membrane protease subunit 1 (immp1l), found in Xenopus tropicalis (Western clawed frog).